An 884-amino-acid polypeptide reads, in one-letter code: Blastomere cadherin (884 aa).

Positions Met1 to Ser26 are cleaved as a signal peptide. Positions Ile27–Arg157 are excised as a propeptide. Cadherin domains are found at residues Asp158–Phe265, Thr266–Phe378, Asp379–Phe489, Val490–Pro595, and Val596–Leu706. Topologically, residues Asp158–Leu706 are extracellular. Residues Asn427, Asn560, and Asn683 are each glycosylated (N-linked (GlcNAc...) asparagine). A helical membrane pass occupies residues Pro707 to Leu730. Topologically, residues Lys731 to Glu884 are cytoplasmic.

As to expression, expressed in pituitary gland, lung and kidney.

The protein resides in the cell membrane. Its function is as follows. Cadherins are calcium-dependent cell adhesion proteins. They preferentially interact with themselves in a homophilic manner in connecting cells; cadherins may thus contribute to the sorting of heterogeneous cell types. The chain is Blastomere cadherin from Xenopus laevis (African clawed frog).